Reading from the N-terminus, the 73-residue chain is UPF0154 protein BcerKBAB4_3367 (73 aa).

The chain crosses the membrane as a helical span at residues 4 to 24 (WLGILVGVVALVAGVALGFFI).

The protein belongs to the UPF0154 family.

The protein localises to the cell membrane. The protein is UPF0154 protein BcerKBAB4_3367 of Bacillus mycoides (strain KBAB4) (Bacillus weihenstephanensis).